The primary structure comprises 216 residues: Minor fimbrial subunit HifD (216 aa).

A signal peptide spans 1–19 (MQKTPKKLTALCHQQSTAS). The N-palmitoyl cysteine moiety is linked to residue Cys-20. Cys-20 carries S-diacylglycerol cysteine lipidation. The interval 159 to 180 (PINVDGSQANSEKAPDTGKEQN) is disordered.

The protein belongs to the fimbrial protein family.

The protein localises to the cell membrane. The protein resides in the fimbrium. May be a minor structural protein required for pilus biogenesis. This is Minor fimbrial subunit HifD (hifD) from Haemophilus influenzae.